A 283-amino-acid polypeptide reads, in one-letter code: DegV domain-containing protein lmo2514 (283 aa).

Positions 5 to 282 (IAVVTDSTTY…EGALGLTWSI (278 aa)) constitute a DegV domain. Hexadecanoate is bound by residues Ser-63 and Ser-96.

In terms of biological role, may bind long-chain fatty acids, such as palmitate, and may play a role in lipid transport or fatty acid metabolism. This chain is DegV domain-containing protein lmo2514, found in Listeria monocytogenes serovar 1/2a (strain ATCC BAA-679 / EGD-e).